We begin with the raw amino-acid sequence, 655 residues long: MTFEIKHRDAMGRIGILNINGKKIETPTIMPVIHPNPKKQIVSMDLINKLADVIITNSYITYKTKHLREIAEEKGIHKLIGFDKVIVTDSGSFQLGVYGDVEVEPMEIIEFQERIGVDVGTILDIPTPPDVDRERAEKELEETLKRAKASIELKEERGFKLLLNGTVQGSTYLDLRQKSAKEMAKLGFDIYPIGAVVPLMEQYRYRDVAEIIINSKMYLPTNKPVHLFGCGHPMFFALAVALGCDLFDSAAYALYAKDDRYLTERGTLHLEEIKDLKAFPCSCPVCSSYTPKELASLNKKERERLLAEHNLYVTFEEINRIKQAIRDGSLWELVEERVRCHPKLLEAYRVVRKYIDYIEKFDPVTKKSAFFYTGIESMFRPEVLRHKKRLKRLRYEKVYITTVSSSIEKPYHEHLNVVETDVDILIKDPVFGFIPYYIDTVYPLSQHEIPELFDYEKEINKRFVDEFIDWLKKKIGEDNILDIMTYNYYINYFSANKKINADALRIRKMLQYQYGFDIIDDELMNKIKVVRSKTTGRLRQVLDENGEILFSVRSNDNLLIPSEKGAKLLWKKIPFPKYRVVVNKEAEEFAREGRNVFAKFVIDCDEELRPYEEVLVVNEDDELLAYGTTILNGIELREFNYGLAVKVRGGLKINK.

Asp89 serves as the catalytic Nucleophile. Residues Asp124 and Ala195 each contribute to the substrate site. Zn(2+) is bound by residues Cys281, Cys283, and Cys286. The region spanning 577–652 (KYRVVVNKEA…LAVKVRGGLK (76 aa)) is the PUA domain.

It belongs to the archaeosine tRNA-ribosyltransferase family. Requires Zn(2+) as cofactor.

The catalysed reaction is guanosine(15) in tRNA + 7-cyano-7-deazaguanine = 7-cyano-7-carbaguanosine(15) in tRNA + guanine. It participates in tRNA modification; archaeosine-tRNA biosynthesis. Functionally, exchanges the guanine residue with 7-cyano-7-deazaguanine (preQ0) at position 15 in the dihydrouridine loop (D-loop) of archaeal tRNAs. Can also utilize guanine as substrate. This chain is tRNA-guanine(15) transglycosylase, found in Methanocaldococcus jannaschii (strain ATCC 43067 / DSM 2661 / JAL-1 / JCM 10045 / NBRC 100440) (Methanococcus jannaschii).